The chain runs to 103 residues: Histone H4 (103 aa).

Over residues 1–14 the composition is skewed to gly residues; that stretch reads MSGRGKGGKGLGKG. Residues 1–20 form a disordered region; sequence MSGRGKGGKGLGKGGAKRHR. S2 is modified (N-acetylserine). Residues K6 and K13 each carry the N6-acetyl-N6-methyllysine; alternate modification. Residues 17 to 21 mediate DNA binding; sequence KRHRK. N6-methyllysine is present on K21.

It belongs to the histone H4 family. As to quaternary structure, the nucleosome is a histone octamer containing two molecules each of H2A, H2B, H3 and H4 assembled in one H3-H4 heterotetramer and two H2A-H2B heterodimers. The octamer wraps approximately 147 bp of DNA.

Its subcellular location is the nucleus. The protein resides in the chromosome. Its function is as follows. Core component of nucleosome. Nucleosomes wrap and compact DNA into chromatin, limiting DNA accessibility to the cellular machineries which require DNA as a template. Histones thereby play a central role in transcription regulation, DNA repair, DNA replication and chromosomal stability. DNA accessibility is regulated via a complex set of post-translational modifications of histones, also called histone code, and nucleosome remodeling. This is Histone H4 from Solaster stimpsoni (Striped sun sea star).